The sequence spans 138 residues: rRNA methyltransferase 1, mitochondrial (138 aa).

A mitochondrion-targeting transit peptide spans 1 to 21 (MNNQPCSIVWRRFLTSKVKPA). The segment at 92-113 (KQDILSSKRQQEEHKSKYSRKS) is disordered.

It belongs to the class IV-like SAM-binding methyltransferase superfamily. RNA methyltransferase TrmH family.

It localises to the mitochondrion. It catalyses the reaction a guanosine in 21S rRNA + S-adenosyl-L-methionine = a 2'-O-methylguanosine in 21S rRNA + S-adenosyl-L-homocysteine + H(+). Its function is as follows. S-adenosyl-L-methionine-dependent 2'-O-ribose methyltransferase that catalyzes the formation of the 2'-O-methylguanosine corresponding to position 2270 in S.cerevisiae 21S mitochondrial large ribosomal RNA, a universally conserved modification in the peptidyl transferase domain of the 21S rRNA. This is rRNA methyltransferase 1, mitochondrial from Lachancea kluyveri (strain ATCC 58438 / CBS 3082 / BCRC 21498 / NBRC 1685 / JCM 7257 / NCYC 543 / NRRL Y-12651) (Yeast).